Reading from the N-terminus, the 301-residue chain is Isonocardicin synthase (301 aa).

As to quaternary structure, monomer.

It catalyses the reaction nocardicin G + S-adenosyl-L-methionine = isonocardicin C + S-methyl-5'-thioadenosine + H(+). The enzyme catalyses nocardicin E + S-adenosyl-L-methionine = isonocardicin A + S-methyl-5'-thioadenosine + H(+). The protein operates within antibiotic biosynthesis. Its function is as follows. Involved in the biosynthesis of the beta-lactam antibiotic nocardicin A. In the presence of S-adenosyl-L-methionine (AdoMet), catalyzes the transfer of a 3-amino-3-carboxypropyl group from AdoMet to nocardicin G, forming isonocardicin C. Can also catalyze the transformation of nocardicin E and F to isonocardicin A and B, respectively, but in vivo substrate is probably nocardicin G. The sequence is that of Isonocardicin synthase from Nocardia uniformis subsp. tsuyamanensis.